Consider the following 118-residue polypeptide: Small ribosomal subunit protein uS13 (118 aa).

Residues 94–118 (GLPLRGQRTRTNARTRKGPRKAIRK) are disordered.

This sequence belongs to the universal ribosomal protein uS13 family. In terms of assembly, part of the 30S ribosomal subunit. Forms a loose heterodimer with protein S19. Forms two bridges to the 50S subunit in the 70S ribosome.

Its function is as follows. Located at the top of the head of the 30S subunit, it contacts several helices of the 16S rRNA. In the 70S ribosome it contacts the 23S rRNA (bridge B1a) and protein L5 of the 50S subunit (bridge B1b), connecting the 2 subunits; these bridges are implicated in subunit movement. Contacts the tRNAs in the A and P-sites. The protein is Small ribosomal subunit protein uS13 of Stenotrophomonas maltophilia (strain R551-3).